A 151-amino-acid chain; its full sequence is UPF0756 membrane protein GTNG_2661 (151 aa).

4 consecutive transmembrane segments (helical) span residues 5–25, 53–73, 86–106, and 116–136; these read VLFLLLLLAIGVIAKNQSLII, WGVTVITVAVLAPIATGEIGF, WIALLFGIFVALIAKGGVMLL, and LVLGTVIAVSLFHGVAVGPLI.

It belongs to the UPF0756 family.

The protein localises to the cell membrane. This chain is UPF0756 membrane protein GTNG_2661, found in Geobacillus thermodenitrificans (strain NG80-2).